A 508-amino-acid chain; its full sequence is ATP synthase subunit alpha, chloroplastic (508 aa).

170 to 177 (GDRQTGKT) lines the ATP pocket.

The protein belongs to the ATPase alpha/beta chains family. In terms of assembly, F-type ATPases have 2 components, CF(1) - the catalytic core - and CF(0) - the membrane proton channel. CF(1) has five subunits: alpha(3), beta(3), gamma(1), delta(1), epsilon(1). CF(0) has four main subunits: a, b, b' and c.

It is found in the plastid. The protein localises to the chloroplast thylakoid membrane. The enzyme catalyses ATP + H2O + 4 H(+)(in) = ADP + phosphate + 5 H(+)(out). Produces ATP from ADP in the presence of a proton gradient across the membrane. The alpha chain is a regulatory subunit. The polypeptide is ATP synthase subunit alpha, chloroplastic (Helianthus annuus (Common sunflower)).